Consider the following 271-residue polypeptide: Colicin-M (271 aa).

Residues 2–9 (ETLTVHAP) carry the TonB box motif.

Colicins are polypeptide toxins produced by and active against E.coli and closely related bacteria. Its function is as follows. This is a calcium-requiring inhibitor for murein biosynthesis; it causes lysis of sensitive cells accompanied by murein degradation. The target site is possibly the cytoplasmic membrane. In Escherichia coli, this protein is Colicin-M (cma).